We begin with the raw amino-acid sequence, 231 residues long: Octanoyl-[acyl-carrier-protein]:protein N-octanoyltransferase LIPT2, mitochondrial (231 aa).

The region spanning 41–224 (GTKAGVLLVC…AFKETFKCTL (184 aa)) is the BPL/LPL catalytic domain. K43 carries the post-translational modification N6-succinyllysine. Substrate-binding positions include 85–92 (RGGLATFH), 154–156 (AIG), and 167–169 (GLA). Catalysis depends on C185, which acts as the Acyl-thioester intermediate.

It belongs to the LipB family.

It localises to the mitochondrion. The enzyme catalyses octanoyl-[ACP] + L-lysyl-[protein] = N(6)-octanoyl-L-lysyl-[protein] + holo-[ACP] + H(+). Its pathway is protein modification; protein lipoylation via endogenous pathway; protein N(6)-(lipoyl)lysine from octanoyl-[acyl-carrier-protein]: step 1/2. Its function is as follows. Catalyzes the transfer of endogenously produced octanoic acid from octanoyl-acyl-carrier-protein onto the lipoyl domains of lipoate-dependent enzymes such as the protein H of the glycine cleavage system (GCSH). Lipoyl-ACP can also act as a substrate although octanoyl-ACP is likely to be the physiological substrate. This Mus musculus (Mouse) protein is Octanoyl-[acyl-carrier-protein]:protein N-octanoyltransferase LIPT2, mitochondrial.